Consider the following 346-residue polypeptide: tRNA-specific 2-thiouridylase MnmA (346 aa).

6–13 serves as a coordination point for ATP; it reads AMSGGTDS. Cys-90 (nucleophile) is an active-site residue. Cys-90 and Cys-187 are oxidised to a cystine. Gly-114 contributes to the ATP binding site. An interaction with tRNA region spans residues 137–139; that stretch reads KDQ. Catalysis depends on Cys-187, which acts as the Cysteine persulfide intermediate. The tract at residues 292–293 is interaction with tRNA; that stretch reads RY.

The protein belongs to the MnmA/TRMU family.

Its subcellular location is the cytoplasm. It carries out the reaction S-sulfanyl-L-cysteinyl-[protein] + uridine(34) in tRNA + AH2 + ATP = 2-thiouridine(34) in tRNA + L-cysteinyl-[protein] + A + AMP + diphosphate + H(+). Catalyzes the 2-thiolation of uridine at the wobble position (U34) of tRNA, leading to the formation of s(2)U34. The polypeptide is tRNA-specific 2-thiouridylase MnmA (Nitratidesulfovibrio vulgaris (strain DP4) (Desulfovibrio vulgaris)).